A 66-amino-acid polypeptide reads, in one-letter code: Small ribosomal subunit protein bS21 (66 aa).

It belongs to the bacterial ribosomal protein bS21 family.

This Persephonella marina (strain DSM 14350 / EX-H1) protein is Small ribosomal subunit protein bS21.